The sequence spans 69 residues: DNA-directed RNA polymerase subunit epsilon (69 aa).

This sequence belongs to the RNA polymerase subunit epsilon family. As to quaternary structure, RNAP is composed of a core of 2 alpha, a beta and a beta' subunit. The core is associated with a delta subunit, and at least one of epsilon or omega. When a sigma factor is associated with the core the holoenzyme is formed, which can initiate transcription.

The enzyme catalyses RNA(n) + a ribonucleoside 5'-triphosphate = RNA(n+1) + diphosphate. Functionally, a non-essential component of RNA polymerase (RNAP). In Bacillus velezensis (strain DSM 23117 / BGSC 10A6 / LMG 26770 / FZB42) (Bacillus amyloliquefaciens subsp. plantarum), this protein is DNA-directed RNA polymerase subunit epsilon.